The primary structure comprises 259 residues: Global transcriptional regulator CodY (259 aa).

The segment at 1–155 (MDLLSRARKI…GATVVGMEIL (155 aa)) is GAF domain. The H-T-H motif DNA-binding region spans 203–222 (ASKIADRVGITRSVIVNALR). S215 is modified (phosphoserine).

This sequence belongs to the CodY family.

It is found in the cytoplasm. Functionally, DNA-binding global transcriptional regulator which is involved in the adaptive response to starvation and acts by directly or indirectly controlling the expression of numerous genes in response to nutrient availability. During rapid exponential growth, CodY is highly active and represses genes whose products allow adaptation to nutrient depletion. In Oceanobacillus iheyensis (strain DSM 14371 / CIP 107618 / JCM 11309 / KCTC 3954 / HTE831), this protein is Global transcriptional regulator CodY.